We begin with the raw amino-acid sequence, 432 residues long: Enolase (432 aa).

Residue Gln163 participates in (2R)-2-phosphoglycerate binding. Glu205 acts as the Proton donor in catalysis. Residues Asp242, Glu288, and Asp315 each contribute to the Mg(2+) site. Lys340, Arg369, Ser370, and Lys391 together coordinate (2R)-2-phosphoglycerate. Catalysis depends on Lys340, which acts as the Proton acceptor.

It belongs to the enolase family. In terms of assembly, homodimer. It depends on Mg(2+) as a cofactor.

It is found in the cytoplasm. The protein localises to the secreted. Its subcellular location is the cell surface. It carries out the reaction (2R)-2-phosphoglycerate = phosphoenolpyruvate + H2O. It functions in the pathway carbohydrate degradation; glycolysis; pyruvate from D-glyceraldehyde 3-phosphate: step 4/5. The covalent binding to the substrate causes inactivation of the enzyme, and possibly serves as a signal for the export of the protein. Functionally, catalyzes the reversible conversion of 2-phosphoglycerate (2-PG) into phosphoenolpyruvate (PEP). It is essential for the degradation of carbohydrates via glycolysis. This chain is Enolase, found in Enterococcus hirae.